We begin with the raw amino-acid sequence, 228 residues long: LexA repressor (228 aa).

A DNA-binding region (H-T-H motif) is located at residues 26 to 46; that stretch reads FDEMKDALDLRSKSGIHRLIT. Residues Ser-149 and Lys-187 each act as for autocatalytic cleavage activity in the active site.

This sequence belongs to the peptidase S24 family. As to quaternary structure, homodimer.

The catalysed reaction is Hydrolysis of Ala-|-Gly bond in repressor LexA.. In terms of biological role, represses a number of genes involved in the response to DNA damage (SOS response), including recA and lexA. Has been shown to bind to the direct repeat sequence 5'-GTT-N(7)-GTTC-3'. In the presence of single-stranded DNA, RecA interacts with LexA causing an autocatalytic cleavage which disrupts the DNA-binding part of LexA, leading to derepression of the SOS regulon and eventually DNA repair. In Cereibacter sphaeroides (strain ATCC 17023 / DSM 158 / JCM 6121 / CCUG 31486 / LMG 2827 / NBRC 12203 / NCIMB 8253 / ATH 2.4.1.) (Rhodobacter sphaeroides), this protein is LexA repressor.